Reading from the N-terminus, the 252-residue chain is 3-deoxy-manno-octulosonate cytidylyltransferase (252 aa).

This sequence belongs to the KdsB family.

The protein resides in the cytoplasm. The enzyme catalyses 3-deoxy-alpha-D-manno-oct-2-ulosonate + CTP = CMP-3-deoxy-beta-D-manno-octulosonate + diphosphate. It functions in the pathway nucleotide-sugar biosynthesis; CMP-3-deoxy-D-manno-octulosonate biosynthesis; CMP-3-deoxy-D-manno-octulosonate from 3-deoxy-D-manno-octulosonate and CTP: step 1/1. The protein operates within bacterial outer membrane biogenesis; lipopolysaccharide biosynthesis. Its function is as follows. Activates KDO (a required 8-carbon sugar) for incorporation into bacterial lipopolysaccharide in Gram-negative bacteria. This Thiobacillus denitrificans (strain ATCC 25259 / T1) protein is 3-deoxy-manno-octulosonate cytidylyltransferase.